Reading from the N-terminus, the 328-residue chain is Sin3 histone deacetylase corepressor complex component SDS3 (328 aa).

The segment covering 1–22 (MSAAGLLAPAPAPAAAPAAPEY) has biased composition (low complexity). The tract at residues 1-69 (MSAAGLLAPA…HDEEDYVEMK (69 aa)) is disordered. Serine 2 is subject to N-acetylserine. Positions 2–170 (SAAGLLAPAP…IENEKLTMEL (169 aa)) are mediates interaction with USP17L2. 2 stretches are compositionally biased toward acidic residues: residues 23–37 (YPED…EDDE) and 45–54 (SDEDTEDASE). A phosphoserine mark is found at serine 32 and serine 45. Threonine 49 is modified (phosphothreonine). Serine 53 carries the phosphoserine modification. Residues 56–69 (DLAKHDEEDYVEMK) are compositionally biased toward basic and acidic residues. The stretch at 66 to 171 (VEMKEQMYQD…ENEKLTMELT (106 aa)) forms a coiled coil. Residues lysine 69, lysine 178, and lysine 201 each participate in a glycyl lysine isopeptide (Lys-Gly) (interchain with G-Cter in SUMO2) cross-link. Positions 188–226 (RPNDPVPIPDKRRKPAPAQLNYLLTDEQIMEDLRTLNKL) are sin3 interaction domain (SID). Positions 226–252 (LKSPKRPASPSSPEHLPATPAESPAQR) are disordered. A phosphoserine mark is found at serine 228, serine 234, and serine 237. Threonine 244 bears the Phosphothreonine mark.

Belongs to the SDS3 family. In terms of assembly, interacts with HCFC1. Homodimer. Component of the SIN3 histone deacetylase (HDAC) corepressor complex. Interacts with SIN3A. Interaction with SIN3B enhances the interaction between SIN3B and HDAC1 to form a complex. Component of a mSin3A corepressor complex that contains SIN3A, SAP130, SUDS3/SAP45, ARID4B/SAP180, HDAC1 and HDAC2. Interacts with USP17L2; the interaction is direct. Interacts with FOXK2. In terms of processing, polyubiquitinated. 'Lys-63'-polyubiquitinated SUDS3 positively regulates histone deacetylation. Regulated through deubiquitination by USP17L2/USP17 that cleaves 'Lys-63'-linked ubiquitin chains. In terms of tissue distribution, expressed in all newborn tissues tested, including brain, kidney and liver.

The protein localises to the nucleus. Regulatory protein which represses transcription and augments histone deacetylase activity of HDAC1. May have a potential role in tumor suppressor pathways through regulation of apoptosis. May function in the assembly and/or enzymatic activity of the mSin3A corepressor complex or in mediating interactions between the complex and other regulatory complexes. The sequence is that of Sin3 histone deacetylase corepressor complex component SDS3 (Suds3) from Mus musculus (Mouse).